A 159-amino-acid polypeptide reads, in one-letter code: Putative RING-H2 finger protein ATL69 (159 aa).

A helical transmembrane segment spans residues 13–33 (LGYGIAIAVSILVLISFIMLA). Residues 94 to 136 (CSICLCDYEAREPVRCIPECNHCFHTDCVDEWLRTSATCPLCR) form an RING-type; atypical zinc finger.

It belongs to the RING-type zinc finger family. ATL subfamily.

The protein localises to the membrane. It carries out the reaction S-ubiquitinyl-[E2 ubiquitin-conjugating enzyme]-L-cysteine + [acceptor protein]-L-lysine = [E2 ubiquitin-conjugating enzyme]-L-cysteine + N(6)-ubiquitinyl-[acceptor protein]-L-lysine.. Its pathway is protein modification; protein ubiquitination. This Arabidopsis thaliana (Mouse-ear cress) protein is Putative RING-H2 finger protein ATL69 (ATL69).